The sequence spans 223 residues: Deoxyribose-phosphate aldolase (223 aa).

D89 acts as the Proton donor/acceptor in catalysis. Catalysis depends on K152, which acts as the Schiff-base intermediate with acetaldehyde. K181 (proton donor/acceptor) is an active-site residue.

Belongs to the DeoC/FbaB aldolase family. DeoC type 1 subfamily.

It localises to the cytoplasm. The catalysed reaction is 2-deoxy-D-ribose 5-phosphate = D-glyceraldehyde 3-phosphate + acetaldehyde. It participates in carbohydrate degradation; 2-deoxy-D-ribose 1-phosphate degradation; D-glyceraldehyde 3-phosphate and acetaldehyde from 2-deoxy-alpha-D-ribose 1-phosphate: step 2/2. Catalyzes a reversible aldol reaction between acetaldehyde and D-glyceraldehyde 3-phosphate to generate 2-deoxy-D-ribose 5-phosphate. This chain is Deoxyribose-phosphate aldolase, found in Listeria monocytogenes serovar 1/2a (strain ATCC BAA-679 / EGD-e).